The primary structure comprises 92 residues: Small ribosomal subunit protein bS20 (92 aa).

This sequence belongs to the bacterial ribosomal protein bS20 family.

Binds directly to 16S ribosomal RNA. This is Small ribosomal subunit protein bS20 from Methylacidiphilum infernorum (isolate V4) (Methylokorus infernorum (strain V4)).